A 624-amino-acid chain; its full sequence is (-)-beta-phellandrene synthase 3, chloroplastic (624 aa).

The transit peptide at 1 to 48 (MAIVSSVPLASKSCLHKSLISSIHKLKPFCRTIPTLGMSRPGKYVMPS) directs the protein to the chloroplast. 3 residues coordinate Mg(2+): aspartate 375, aspartate 379, and aspartate 527. The DDXXD motif signature appears at 375-379 (DDMYD).

The protein belongs to the terpene synthase family. Tpsd subfamily. Requires Mg(2+) as cofactor. The cofactor is Mn(2+).

The protein localises to the plastid. It localises to the chloroplast. It carries out the reaction (2E)-geranyl diphosphate = (-)-beta-phellandrene + diphosphate. Its pathway is terpene metabolism; oleoresin biosynthesis. Terpene synthase (TPS) involved in the biosynthesis of monoterpene natural products included in conifer oleoresin secretions and volatile emissions; these compounds contribute to biotic and abiotic stress defense against herbivores and pathogens. Catalyzes the conversion of (2E)-geranyl diphosphate (GPP) to (-)-beta-phellandrene. The sequence is that of (-)-beta-phellandrene synthase 3, chloroplastic from Picea sitchensis (Sitka spruce).